The sequence spans 80 residues: Venom protein HGE029 (80 aa).

Positions Met-1–Ala-22 are cleaved as a signal peptide.

It belongs to the non-disulfide-bridged peptide (NDBP) superfamily. Long chain multifunctional peptide (group 2) family. As to expression, expressed by the venom gland.

The protein resides in the secreted. The protein is Venom protein HGE029 of Hoffmannihadrurus gertschi (Scorpion).